A 514-amino-acid polypeptide reads, in one-letter code: GMP synthase [glutamine-hydrolyzing] (514 aa).

A Glutamine amidotransferase type-1 domain is found at 7 to 197 (KVLILDFGSQ…LFNICKCERN (191 aa)). Residue C84 is the Nucleophile of the active site. Active-site residues include H171 and E173. Residues 198 to 389 (WNMGSFIEYE…LKLPEDIVYR (192 aa)) enclose the GMPS ATP-PPase domain. Residue 225–231 (SGGVDSS) coordinates ATP.

In terms of assembly, homodimer.

The enzyme catalyses XMP + L-glutamine + ATP + H2O = GMP + L-glutamate + AMP + diphosphate + 2 H(+). The protein operates within purine metabolism; GMP biosynthesis; GMP from XMP (L-Gln route): step 1/1. In terms of biological role, catalyzes the synthesis of GMP from XMP. This is GMP synthase [glutamine-hydrolyzing] from Brachyspira hyodysenteriae (strain ATCC 49526 / WA1).